Reading from the N-terminus, the 1541-residue chain is ATP-binding cassette sub-family C member 2 (1541 aa).

Topologically, residues 1-26 (MDKFCNSTFWDLSLLESPEADLPLCF) are extracellular. Residue N6 is glycosylated (N-linked (GlcNAc...) asparagine). The chain crosses the membrane as a helical span at residues 27 to 47 (EQTVLVWIPLGFLWLLAPWQL). The Cytoplasmic portion of the chain corresponds to 48 to 67 (YSVYRSRTKRSSITKFYLAK). A helical transmembrane segment spans residues 68–88 (QVFVVFLLILAAIDLSLALTE). Residues 89–92 (DTGQ) are Extracellular-facing. A helical transmembrane segment spans residues 93 to 113 (ATVPPVRYTNPILYLCTWLLV). Residues 114–125 (LAVQHSRQWCVR) lie on the Cytoplasmic side of the membrane. A helical transmembrane segment spans residues 126–146 (KNSWFLSLFWILSVLCGVFQF). Residues 147–164 (QTLIRALLKDSKSNMAYS) are Extracellular-facing. Residues 165-185 (YLFFVSYGFQIVLLILTAFSG) traverse the membrane as a helical segment. Topologically, residues 186 to 309 (PSDSTQTPSV…DYPKSWLIKS (124 aa)) are cytoplasmic. Phosphoserine occurs at positions 279 and 281. The helical transmembrane segment at 310–330 (LFKTFHVVILKSFILKLIHDL) threads the bilayer. Positions 318–601 (ILKSFILKLI…LPMVTSSILQ (284 aa)) constitute an ABC transmembrane type-1 1 domain. At 331 to 356 (LVFLNPQLLKLLIGFVKSSNSYVWFG) the chain is on the extracellular side. The helical transmembrane segment at 357 to 377 (YICAILMFAVTLIQSFCLQSY) threads the bilayer. Residues 378-433 (FQHCFVLGMCVRTTVMSSIYKKALTLSNLARKQYTIGETVNLMSVDSQKLMDATNY) are Cytoplasmic-facing. Residues 434-454 (MQLVWSSVIQITLSIFFLWRE) traverse the membrane as a helical segment. The Extracellular segment spans residues 455–457 (LGP). Residues 458-478 (SILAGVGVMVLLIPVNGVLAT) form a helical membrane-spanning segment. Topologically, residues 479–540 (KIRNIQVQNM…NLLRFGQLQS (62 aa)) are cytoplasmic. Residues 541 to 561 (LLIFILQITPILVSVVTFSVY) traverse the membrane as a helical segment. Residues 562 to 583 (VLVDSANVLNAEKAFTSITLFN) lie on the Extracellular side of the membrane. Residues 584 to 604 (ILRFPLSMLPMVTSSILQASV) traverse the membrane as a helical segment. Over 605–967 (SVDRLERYLG…VKFSIYLKYL (363 aa)) the chain is Cytoplasmic. Residues 633–857 (VKFSEASFTW…KGVFARNWKT (225 aa)) enclose the ABC transporter 1 domain. 667 to 674 (GTVGSGKS) lines the ATP pocket. Disordered stretches follow at residues 862–881 (SGPE…DDDD) and 901–923 (RENS…GKSL). At S874 the chain carries Phosphoserine. Positions 906 to 915 (RRTLSRSSRS) are enriched in low complexity. A phosphoserine mark is found at S922 and S926. The chain crosses the membrane as a helical span at residues 968 to 988 (QAVGWWSILFIILFYGLNNVA). The region spanning 975-1260 (ILFIILFYGL…LVRMTSEAET (286 aa)) is the ABC transmembrane type-1 2 domain. At 989 to 1029 (FIGSNLWLSAWTSDSDNLNGTNNSSSHRDMRIGVFGALGLA) the chain is on the extracellular side. Residues N1007, N1010, and N1011 are each glycosylated (N-linked (GlcNAc...) asparagine). The helical transmembrane segment at 1030–1050 (QGICLLISTLWSIYACRNASK) threads the bilayer. Residues 1051 to 1093 (ALHGQLLTNILRAPMRFFDTTPTGRIVNRFSGDISTVDDLLPQ) are Cytoplasmic-facing. The helical transmembrane segment at 1094-1114 (TLRSWMMCFFGIAGTLVMICM) threads the bilayer. A topological domain (extracellular) is located at residue A1115. The helical transmembrane segment at 1116–1136 (TPVFAIIIIPLSILYISVQVF) threads the bilayer. The Cytoplasmic portion of the chain corresponds to 1137–1207 (YVATSRQLRR…TSNRWLAIRL (71 aa)). Residues 1208-1228 (ELVGNLVVFCSALLLVIYRKT) traverse the membrane as a helical segment. The Extracellular segment spans residues 1229-1230 (LT). Residues 1231–1251 (GDVVGFVLSNALNITQTLNWL) form a helical membrane-spanning segment. Over 1252–1541 (VRMTSEAETN…GIENVNHTEL (290 aa)) the chain is Cytoplasmic. Residues 1296 to 1530 (IQFNNYQVRY…RGSFYLMAKE (235 aa)) form the ABC transporter 2 domain. 1330-1337 (GRTGAGKS) is a binding site for ATP. At S1434 the chain carries Phosphoserine.

Belongs to the ABC transporter superfamily. ABCC family. Conjugate transporter (TC 3.A.1.208) subfamily. Mainly expressed in the liver.

It is found in the apical cell membrane. It catalyses the reaction an S-substituted glutathione(in) + ATP + H2O = an S-substituted glutathione(out) + ADP + phosphate + H(+). The enzyme catalyses taurolithocholate 3-sulfate(in) + ATP + H2O = taurolithocholate 3-sulfate(out) + ADP + phosphate + H(+). The catalysed reaction is ATP + H2O + xenobioticSide 1 = ADP + phosphate + xenobioticSide 2.. It carries out the reaction 17beta-estradiol 17-O-(beta-D-glucuronate)(in) + ATP + H2O = 17beta-estradiol 17-O-(beta-D-glucuronate)(out) + ADP + phosphate + H(+). It catalyses the reaction leukotriene C4(in) + ATP + H2O = leukotriene C4(out) + ADP + phosphate + H(+). The enzyme catalyses (4Z,15Z)-bilirubin IXalpha C8-beta-D-glucuronoside(in) + ATP + H2O = (4Z,15Z)-bilirubin IXalpha C8-beta-D-glucuronoside(out) + ADP + phosphate + H(+). The catalysed reaction is (4Z,15Z)-bilirubin IXalpha C8,C12-beta-D-bisglucuronoside(in) + ATP + H2O = (4Z,15Z)-bilirubin IXalpha C8,C12-beta-D-bisglucuronoside(out) + ADP + phosphate + H(+). ATP-dependent transporter of the ATP-binding cassette (ABC) family that binds and hydrolyzes ATP to enable active transport of various substrates including many drugs, toxicants and endogenous compound across cell membranes. Transports a wide variety of conjugated organic anions such as sulfate-, glucuronide- and glutathione (GSH)-conjugates of endo- and xenobiotics substrates. Mediates hepatobiliary excretion of mono- and bis-glucuronidated bilirubin molecules and therefore play an important role in bilirubin detoxification. Also mediates hepatobiliary excretion of others glucuronide conjugates such as 17beta-estradiol 17-glucosiduronic acid and leukotriene C4. Transports sulfated bile salt such as taurolithocholate sulfate. Transports various anticancer drugs, such as anthracycline, vinca alkaloid and methotrexate and HIV-drugs such as protease inhibitors. This chain is ATP-binding cassette sub-family C member 2, found in Rattus norvegicus (Rat).